The chain runs to 520 residues: ATP-dependent clpX-like chaperone, mitochondrial (520 aa).

A mitochondrion-targeting transit peptide spans 1–13 (MLKSASQNFFRAY). An ATP-binding site is contributed by 140–147 (GPSGSGKT).

Belongs to the ClpX chaperone family. In terms of assembly, homohexamer that forms a ring structure; this hexamerization requires ATP binding. Interacts with HEM1.

The protein localises to the mitochondrion inner membrane. Its function is as follows. ATP-dependent unfoldase that stimulates the incorporation of the pyridoxal phosphate cofactor into 5-aminolevulinate synthase (HEM1), thereby activating 5-aminolevulinate (ALA) synthesis, the first step in heme biosynthesis. Up-regulates heme biosynthesis. The chain is ATP-dependent clpX-like chaperone, mitochondrial from Saccharomyces cerevisiae (strain ATCC 204508 / S288c) (Baker's yeast).